The sequence spans 650 residues: L-aspartate N-monooxygenase (nitrosuccinate-forming) (650 aa).

It belongs to the nitrosuccinic acid synthase family. It depends on FAD as a cofactor.

It catalyses the reaction L-aspartate + 3 NADPH + 3 O2 + 2 H(+) = 2-nitrobutanedioate + 3 NADP(+) + 4 H2O. Functionally, involved in the biosynthesis of desferrioxamine derivatives which have iron-binding properties and may act as siderophores. Catalyzes the iterative oxidation of L-aspartic acid to nitrosuccinic acid (2-nitrobutanedioate) via N-hydroxyaspartic acid and nitrososuccinic acid. In Streptomyces davaonensis (strain DSM 101723 / JCM 4913 / KCC S-0913 / 768), this protein is L-aspartate N-monooxygenase (nitrosuccinate-forming).